We begin with the raw amino-acid sequence, 702 residues long: MKHRANGIDLFRIFAATMVVAIHTFPFQSIAPFLDEVITLTVFRVAVPFFFMITGYFLLGRLSLNFSYNNNQRVKKYLYKIGMIYLYSILLYFPLSLLNGTISLKMNILLLLKVFIFDGTFYHLWYFPASIIGTILVTLLLRSIGFKLTVAFSTCLYLVGLGGDSWYGITNQVPLLNKLYTFIFSWSDYTRSGVFFTPVFLCLGIFAYRVSKKLTASKILNLLFYVFIIGMTFESIFLHRFTNVKHDSMYLLLPSCALILFLMLLNWQPKLKVKESADLTLLVYILHPLVIVIVHSISKYIPILKNSLLNFLLVVVCSFILAQLLLNLKRKLRVSKQKIPFERASKEISASAIHHNINEIRKIIPKNTNIMGVVKANAYGCGMVEVAYELEKIGISFFCVATIEEAIALRKSGNQGDILILGYTHPNRINDIKKYNLIQSIVSEEHGKVLNLKKIPIRCHLQVDTGMHRLGVTPNVTIIQQMYLFSNLKIEGIYSHLGSSDSLEQESIARTNTQIFLFNNILSDLEQMGISYGYTHIQSSYGILNYPELSFDFVRIGILCYGFLSDYNSPTKIPIDLQPIVKVKASLITERIVEAGEYVGYGLGAKVEKRTRIGVVSIGYADGIPRALSNAKLTLEFKGQSIKQIGNICMDMMLVDLSEVEDISLNDELIVLPNISKIADEEQTITNELLSRLGSRLGTELN.

Topologically, residues 1–12 are cytoplasmic; sequence MKHRANGIDLFR. A helical membrane pass occupies residues 13–33; the sequence is IFAATMVVAIHTFPFQSIAPF. The Extracellular segment spans residues 34–39; sequence LDEVIT. A helical transmembrane segment spans residues 40–60; it reads LTVFRVAVPFFFMITGYFLLG. Residues 61 to 77 are Cytoplasmic-facing; it reads RLSLNFSYNNNQRVKKY. Residues 78–98 form a helical membrane-spanning segment; that stretch reads LYKIGMIYLYSILLYFPLSLL. Over 99–120 the chain is Extracellular; the sequence is NGTISLKMNILLLLKVFIFDGT. A helical membrane pass occupies residues 121–141; that stretch reads FYHLWYFPASIIGTILVTLLL. Position 142 (Arg-142) is a topological domain, cytoplasmic. A helical membrane pass occupies residues 143–163; sequence SIGFKLTVAFSTCLYLVGLGG. Over 164-191 the chain is Extracellular; sequence DSWYGITNQVPLLNKLYTFIFSWSDYTR. A helical transmembrane segment spans residues 192 to 212; it reads SGVFFTPVFLCLGIFAYRVSK. Over 213–218 the chain is Cytoplasmic; it reads KLTASK. The chain crosses the membrane as a helical span at residues 219-239; that stretch reads ILNLLFYVFIIGMTFESIFLH. Topologically, residues 240–248 are extracellular; that stretch reads RFTNVKHDS. A helical transmembrane segment spans residues 249-269; the sequence is MYLLLPSCALILFLMLLNWQP. Over 270–276 the chain is Cytoplasmic; the sequence is KLKVKES. A helical membrane pass occupies residues 277–297; it reads ADLTLLVYILHPLVIVIVHSI. At 298–307 the chain is on the extracellular side; sequence SKYIPILKNS. A helical membrane pass occupies residues 308-328; the sequence is LLNFLLVVVCSFILAQLLLNL. At 329 to 702 the chain is on the cytoplasmic side; it reads KRKLRVSKQK…LGSRLGTELN (374 aa). The tract at residues 337–702 is racemase; the sequence is QKIPFERASK…LGSRLGTELN (366 aa). Residue Lys-375 is the Proton acceptor of the active site. The residue at position 375 (Lys-375) is an N6-(pyridoxal phosphate)lysine. Residue Arg-469 participates in substrate binding. Tyr-601 serves as the catalytic Proton acceptor. Residue Met-650 coordinates substrate.

The protein in the N-terminal section; belongs to the acyltransferase 3 family. This sequence in the C-terminal section; belongs to the alanine racemase family. Pyridoxal 5'-phosphate is required as a cofactor.

The protein localises to the cell membrane. The protein is Amino-acid racemase (vanTE) of Enterococcus faecalis (Streptococcus faecalis).